A 261-amino-acid polypeptide reads, in one-letter code: Indole-3-glycerol phosphate synthase (261 aa).

Belongs to the TrpC family.

The enzyme catalyses 1-(2-carboxyphenylamino)-1-deoxy-D-ribulose 5-phosphate + H(+) = (1S,2R)-1-C-(indol-3-yl)glycerol 3-phosphate + CO2 + H2O. It participates in amino-acid biosynthesis; L-tryptophan biosynthesis; L-tryptophan from chorismate: step 4/5. The sequence is that of Indole-3-glycerol phosphate synthase from Alkaliphilus metalliredigens (strain QYMF).